The chain runs to 438 residues: Probable exopolygalacturonase B (438 aa).

A signal peptide spans methionine 1–glycine 15. N-linked (GlcNAc...) asparagine glycans are attached at residues asparagine 118, asparagine 185, and asparagine 225. The PbH1 1 repeat unit spans residues threonine 209–asparagine 248. The active-site Proton donor is the aspartate 255. A disulfide bond links cysteine 257 and cysteine 274. N-linked (GlcNAc...) asparagine glycans are attached at residues asparagine 263 and asparagine 275. Residue histidine 278 is part of the active site. PbH1 repeat units follow at residues isoleucine 295–alanine 316 and isoleucine 327–glutamine 348. 4 N-linked (GlcNAc...) asparagine glycosylation sites follow: asparagine 302, asparagine 329, asparagine 354, and asparagine 366. Cysteine 392 and cysteine 398 are joined by a disulfide. One copy of the PbH1 4 repeat lies at cysteine 398–cysteine 430. N-linked (GlcNAc...) asparagine glycosylation is found at asparagine 400 and asparagine 407.

The protein belongs to the glycosyl hydrolase 28 family.

The protein resides in the secreted. It carries out the reaction [(1-&gt;4)-alpha-D-galacturonosyl](n) + H2O = alpha-D-galacturonate + [(1-&gt;4)-alpha-D-galacturonosyl](n-1). Functionally, specific in hydrolyzing the terminal glycosidic bond of polygalacturonic acid and oligogalacturonates. The chain is Probable exopolygalacturonase B (pgxB) from Aspergillus niger (strain ATCC MYA-4892 / CBS 513.88 / FGSC A1513).